We begin with the raw amino-acid sequence, 284 residues long: D-tagatose-1,6-bisphosphate aldolase subunit GatY (284 aa).

The active-site Proton donor is Asp82. Residues His83 and His180 each contribute to the Zn(2+) site. A dihydroxyacetone phosphate-binding site is contributed by Gly181. His208 is a binding site for Zn(2+). Dihydroxyacetone phosphate is bound by residues 209–211 (GAS) and 230–233 (NVAT).

The protein belongs to the class II fructose-bisphosphate aldolase family. TagBP aldolase GatY subfamily. As to quaternary structure, forms a complex with GatZ. The cofactor is Zn(2+).

The enzyme catalyses D-tagatofuranose 1,6-bisphosphate = D-glyceraldehyde 3-phosphate + dihydroxyacetone phosphate. Its pathway is carbohydrate metabolism; D-tagatose 6-phosphate degradation; D-glyceraldehyde 3-phosphate and glycerone phosphate from D-tagatose 6-phosphate: step 2/2. Its function is as follows. Catalytic subunit of the tagatose-1,6-bisphosphate aldolase GatYZ, which catalyzes the reversible aldol condensation of dihydroxyacetone phosphate (DHAP or glycerone-phosphate) with glyceraldehyde 3-phosphate (G3P) to produce tagatose 1,6-bisphosphate (TBP). Requires GatZ subunit for full activity and stability. Is involved in the catabolism of galactitol. The chain is D-tagatose-1,6-bisphosphate aldolase subunit GatY from Shigella boydii serotype 4 (strain Sb227).